A 647-amino-acid chain; its full sequence is Putative ferric-chelate reductase 1 homolog (647 aa).

A helical transmembrane segment spans residues 10-30 (WLATLVTALLAVAIWPDPGQS). One can recognise a Reelin domain in the interval 25 to 195 (PDPGQSLPQG…AAPPLPTQSP (171 aa)). 2 N-linked (GlcNAc...) asparagine glycosylation sites follow: N127 and N158. Residues 245–368 (TKSCTSITVV…GKYHLLVASG (124 aa)) enclose the DOMON domain. In terms of domain architecture, Cytochrome b561 spans 372–570 (KENSVGYHDI…HLIFSIGGMA (199 aa)). Residues 408–428 (LHGAFMIAAWIGTTSLGIIFA) form a helical membrane-spanning segment. Residues H409 and H450 each coordinate heme b. Transmembrane regions (helical) follow at residues 452 to 472 (LLMVTTWSLTVAAYVLIWVEL), 480 to 500 (HSIIGLITVILCFIQPIGALF), 515 to 535 (GHWLGGNLAHILGIVTIFFSV), 548 to 568 (WILVSFVVVHVLVHLIFSIGG), and 616 to 636 (LLGVYGVVLILFVTVLILLVV). 2 residues coordinate heme b: H480 and H516.

This sequence belongs to the FRRS1 family. Heme b serves as cofactor.

The protein localises to the membrane. Its function is as follows. Putative ferric-chelate reductases reduce Fe(3+) to Fe(2+) before its transport from the endosome to the cytoplasm. In Drosophila melanogaster (Fruit fly), this protein is Putative ferric-chelate reductase 1 homolog.